Here is a 108-residue protein sequence, read N- to C-terminus: ATP-dependent Clp protease adapter protein ClpS (108 aa).

Residues 1 to 15 are compositionally biased toward basic and acidic residues; the sequence is MPRESSPDSHHEHGV. A disordered region spans residues 1–24; it reads MPRESSPDSHHEHGVAVEPARPEV.

Belongs to the ClpS family. In terms of assembly, binds to the N-terminal domain of the chaperone ClpA.

Functionally, involved in the modulation of the specificity of the ClpAP-mediated ATP-dependent protein degradation. In Stenotrophomonas maltophilia (strain R551-3), this protein is ATP-dependent Clp protease adapter protein ClpS.